Here is a 96-residue protein sequence, read N- to C-terminus: MTKLNSYETLYIVKPELTEDSLAKLIESYQGLLLERGAKNIITQNRGRRTLKYMIKKYKDAHYVQMNYEGNGEVIQLLERAMKINESIVRFLTTAI.

Belongs to the bacterial ribosomal protein bS6 family.

Its subcellular location is the plastid. The protein localises to the chloroplast. Functionally, binds together with bS18 to 16S ribosomal RNA. The sequence is that of Small ribosomal subunit protein bS6c (rps6) from Guillardia theta (Cryptophyte).